The primary structure comprises 258 residues: Probable N-acetylglucosaminyl-phosphatidylinositol de-N-acetylase (258 aa).

The tract at residues 147–170 (KSSSTTTTSTTSSSSSSSSLSNRT) is disordered. The span at 148–170 (SSSTTTTSTTSSSSSSSSLSNRT) shows a compositional bias: low complexity.

The protein belongs to the PIGL family.

The protein localises to the endoplasmic reticulum membrane. The catalysed reaction is a 6-(N-acetyl-alpha-D-glucosaminyl)-1-(1,2-diacyl-sn-glycero-3-phospho)-1D-myo-inositol + H2O = a 6-(alpha-D-glucosaminyl)-1-(1,2-diacyl-sn-glycero-3-phospho)-1D-myo-inositol + acetate. It participates in glycolipid biosynthesis; glycosylphosphatidylinositol-anchor biosynthesis. Its function is as follows. Involved in the second step of GPI biosynthesis. De-N-acetylation of N-acetylglucosaminyl-phosphatidylinositol. This Dictyostelium discoideum (Social amoeba) protein is Probable N-acetylglucosaminyl-phosphatidylinositol de-N-acetylase (pigl).